We begin with the raw amino-acid sequence, 423 residues long: p-aminobenzoyl-glutamate hydrolase subunit A homolog (423 aa).

This sequence belongs to the peptidase M20 family. Mn(2+) serves as cofactor.

Functionally, catalyzes the cleavage of p-aminobenzoyl-glutamate (PABA-GLU) to form p-aminobenzoate (PABA) and glutamate. The polypeptide is p-aminobenzoyl-glutamate hydrolase subunit A homolog (abgA) (Haemophilus influenzae (strain ATCC 51907 / DSM 11121 / KW20 / Rd)).